Reading from the N-terminus, the 83-residue chain is U15-theraphotoxin-Cg1a (83 aa).

Residues 1–21 (MKAAILLAFAGLALLSVICHA) form the signal peptide. Positions 22-49 (SENVEQDSFEEVFSAIFAMEDDLKPKER) are excised as a propeptide. Intrachain disulfides connect C51-C66, C58-C71, and C65-C77. A81 is modified (alanine amide).

This sequence belongs to the neurotoxin 10 (Hwtx-1) family. 66 (Jztx-24) subfamily. In terms of tissue distribution, expressed by the venom gland.

It localises to the secreted. Probable ion channel inhibitor. The chain is U15-theraphotoxin-Cg1a from Chilobrachys guangxiensis (Chinese earth tiger tarantula).